The primary structure comprises 453 residues: Phosphoglucosamine mutase (453 aa).

Ser-100 acts as the Phosphoserine intermediate in catalysis. 4 residues coordinate Mg(2+): Ser-100, Asp-239, Asp-241, and Asp-243. Ser-100 carries the post-translational modification Phosphoserine.

It belongs to the phosphohexose mutase family. Mg(2+) serves as cofactor. Activated by phosphorylation.

The catalysed reaction is alpha-D-glucosamine 1-phosphate = D-glucosamine 6-phosphate. Catalyzes the conversion of glucosamine-6-phosphate to glucosamine-1-phosphate. This Buchnera aphidicola subsp. Baizongia pistaciae (strain Bp) protein is Phosphoglucosamine mutase.